The sequence spans 490 residues: Pleckstrin homology domain-containing family O member 2 (490 aa).

A PH domain is found at 18-119 (MVDKAGWIKK…WIKALNEGIN (102 aa)). Phosphoserine occurs at positions 164 and 167. The segment at 173–402 (LDLDVPDSGP…DLLGEGPRHP (230 aa)) is disordered. A compositionally biased stretch (low complexity) spans 230 to 243 (APTPVSASSEVSPE). Thr232 is modified (phosphothreonine). A phosphoserine mark is found at Ser235, Ser237, and Ser238. A compositionally biased stretch (acidic residues) spans 244–257 (SQEDSETPAEEDSG). Residue Ser273 is modified to Phosphoserine. Residues 277–297 (PSPQEAPAAESAEPSQAPCSE) show a composition bias toward low complexity. Residues Thr298 and Thr311 each carry the phosphothreonine modification. Ser390 and Ser468 each carry phosphoserine. The stretch at 439–481 (SAETLLSQAVEQLRQATQVLQEMRDLGELSQEAPGLREKRKEL) forms a coiled coil.

The chain is Pleckstrin homology domain-containing family O member 2 (PLEKHO2) from Homo sapiens (Human).